The chain runs to 239 residues: Terpene cyclase idtB (239 aa).

The next 5 membrane-spanning stretches (helical) occupy residues 20 to 40 (MADT…ALMI), 50 to 70 (CMAL…TIVY), 75 to 95 (RVEL…MVGA), 113 to 133 (AGFI…ALAM), and 138 to 158 (GLAY…GGLF). N-linked (GlcNAc...) asparagine glycosylation occurs at N164. The helical transmembrane segment at 197 to 217 (EVFGWLASPLVLWSLVTFLLA) threads the bilayer.

The protein belongs to the paxB family.

Its subcellular location is the membrane. It participates in secondary metabolite biosynthesis. Terpene cyclase; part of the gene cluster that mediates the biosynthesis of paspalitrems, indole-diterpene (IDT) mycotoxins that are potent tremorgens in mammals. The geranylgeranyl diphosphate (GGPP) synthase idtG is proposed to catalyze the first step in IDT biosynthesis via catalysis of a series of iterative condensations of isopentenyl diphosphate (IPP) with dimethylallyl diphosphate (DMAPP), geranyl diphosphate (GPP), and farnesyl diphosphate (FPP), to form GGPP. Condensation of indole-3-glycerol phosphate with GGPP by the prenyltransferase idtC then forms 3-geranylgeranylindole (3-GGI). Epoxidation of the two terminal alkenes of the geranylgeranyl moiety by the FAD-dependent monooxygenase idtM, and cyclization by the terpene cyclase idtB then leads to the production of paspaline. The cytochrome P450 monooxygenase idtP then catalyzes oxidative elimination of the pendant methyl group at C-12 of paspaline and generates the C-10 ketone to yield 13-desoxypaxilline. The cytochrome P450 monooxygenase idtQ may catalyze the C-13 oxidation of 13-desoxypaxilline to afford paxilline. Considering that both paspalicine and paxilline were detected in C.paspali, idtQ also catalyzes the formation of paspalinine from 13-desoxypaxilline via paspalicine as an intermediate. Finally, the alpha-prenyltransferase idtF prenylates paspalinine at the C-20 or the C-21 positions to yield paspalitrems A and C, respectively. The hydroxylation of paspalitrem A at C-32 by a still unknown oxidase affords paspalitrem B. This Claviceps paspali (Rye ergot fungus) protein is Terpene cyclase idtB.